The primary structure comprises 146 residues: VHLSGEEKAAVTGLWGKVDLEKVGGQSLGSLLIVYPWTQRFFDSFGDLSSPSAVMSNPKVKAHGKKVLTSFSDGLNHLDNLKGTFAKLSELHCDKLHVDPENFRLLGNVLVRVLACNFGPEFTPQVQAAFQKVVAGVANALAHKYH.

Residue V1 is modified to N-acetylvaline. One can recognise a Globin domain in the interval 2–146; sequence HLSGEEKAAV…VANALAHKYH (145 aa). T12 carries the post-translational modification Phosphothreonine. A Phosphoserine modification is found at S44. An N6-acetyllysine modification is found at K59. H63 is a heme b binding site. K82 is modified (N6-acetyllysine). Heme b is bound at residue H92. The residue at position 93 (C93) is an S-nitrosocysteine. The residue at position 144 (K144) is an N6-acetyllysine.

It belongs to the globin family. Heterotetramer of two alpha chains and two beta chains. In terms of tissue distribution, red blood cells.

Involved in oxygen transport from the lung to the various peripheral tissues. This is Hemoglobin subunit beta (HBB) from Tupaia glis (Common tree shrew).